The chain runs to 637 residues: Transcription factor GLABRA 3 (637 aa).

Residues 437–486 (DETGNHAVLEKKRREKLNERFMTLRKIIPSINKIDKVSILDDTIEYLQEL) enclose the bHLH domain. The segment at 497-521 (RESTDTETRGTMTMKRKKPCDAGER) is disordered. A binding with MYB0/GL1 and MYB23 region spans residues 541–637 (NVGEAEPADT…EALQRVAWIC (97 aa)).

In terms of assembly, efficient DNA binding requires dimerization with another bHLH protein. Homodimer and heterodimer with BHLH2. Interacts directly with TTG1 and MYB0/GL1 to form a complex. Its interaction with TRY prevents MYB0/GL1 binding. Interacts with MYB75/PAP1, MYB90/PAP2, TT2, CPC, MYB23 and MYB66/WER. Interacts with MYB82. In terms of tissue distribution, mostly expressed in roots and flowers. Also present in stems and leaves, and, to a lower extent, in hypocotyls. Expressed in epidermal root hair cells (trichoblasts) and moves to root hairless cells (atrichoblasts) by a cell-to-cell movement through plasmodesmata (at protein level).

It is found in the nucleus. Transcription activator, when associated with MYB75/PAP1, MYB90/PAP2 or TT2. Involved in epidermal cell fate specification. Negatively regulates stomata formation, but, in association with TTG1 and MYB0/GL1, promotes trichome formation, branching and endoreplication. Also regulates trichome cell wall maturation. Together with MYB66/WER, promotes the formation of non-hair cells in root epidermis cells in the N position. Whereas together with CPC, promotes the formation of hair cells in root epidermis cells in the H position by inhibiting non-hair cell formation. Also seems to play a role in the activation of anthocyanin biosynthesis, probably together with MYB75/PAP1. Activates the transcription of GL2. The protein is Transcription factor GLABRA 3 (GL3) of Arabidopsis thaliana (Mouse-ear cress).